The primary structure comprises 93 residues: Small ribosomal subunit protein uS19 (93 aa).

Residues 73-93 (EFSPTRTYRGHNKKDKKIQKK) are disordered. The segment covering 80-93 (YRGHNKKDKKIQKK) has biased composition (basic residues).

This sequence belongs to the universal ribosomal protein uS19 family.

Protein S19 forms a complex with S13 that binds strongly to the 16S ribosomal RNA. This chain is Small ribosomal subunit protein uS19 (rpsS), found in Aster yellows phytoplasma.